The sequence spans 476 residues: Bifunctional protein HldE (476 aa).

Residues 1–318 (MKVTLPDFRR…ENAIRGRAET (318 aa)) are ribokinase. 195-198 (NLSE) lines the ATP pocket. The active site involves D264. The segment at 344-476 (MTNGIFDILH…IIQSIKNGLG (133 aa)) is cytidylyltransferase.

In the N-terminal section; belongs to the carbohydrate kinase PfkB family. It in the C-terminal section; belongs to the cytidylyltransferase family. Homodimer.

It carries out the reaction D-glycero-beta-D-manno-heptose 7-phosphate + ATP = D-glycero-beta-D-manno-heptose 1,7-bisphosphate + ADP + H(+). The enzyme catalyses D-glycero-beta-D-manno-heptose 1-phosphate + ATP + H(+) = ADP-D-glycero-beta-D-manno-heptose + diphosphate. It participates in nucleotide-sugar biosynthesis; ADP-L-glycero-beta-D-manno-heptose biosynthesis; ADP-L-glycero-beta-D-manno-heptose from D-glycero-beta-D-manno-heptose 7-phosphate: step 1/4. It functions in the pathway nucleotide-sugar biosynthesis; ADP-L-glycero-beta-D-manno-heptose biosynthesis; ADP-L-glycero-beta-D-manno-heptose from D-glycero-beta-D-manno-heptose 7-phosphate: step 3/4. Catalyzes the phosphorylation of D-glycero-D-manno-heptose 7-phosphate at the C-1 position to selectively form D-glycero-beta-D-manno-heptose-1,7-bisphosphate. In terms of biological role, catalyzes the ADP transfer from ATP to D-glycero-beta-D-manno-heptose 1-phosphate, yielding ADP-D-glycero-beta-D-manno-heptose. This is Bifunctional protein HldE from Yersinia enterocolitica serotype O:8 / biotype 1B (strain NCTC 13174 / 8081).